Reading from the N-terminus, the 166-residue chain is Nascent polypeptide-associated complex subunit beta (166 aa).

2 disordered regions span residues 1–40 (MVLN…EDPK) and 129–166 (HAAS…DKLD). The NAC-A/B domain occupies 35–100 (GGEDPKLQAA…GVDKELTELV (66 aa)). Positions 141 to 153 (DDDDVPDVVENFD) are enriched in acidic residues. Residues 154–166 (EADKKETEVDKLD) show a composition bias toward basic and acidic residues.

This sequence belongs to the NAC-beta family. Part of the nascent polypeptide-associated complex (NAC), consisting of EGD2 and EGD1. NAC associates with ribosomes via EGD1.

Its subcellular location is the cytoplasm. The protein resides in the nucleus. In terms of biological role, component of the nascent polypeptide-associated complex (NAC), a dynamic component of the ribosomal exit tunnel, protecting the emerging polypeptides from interaction with other cytoplasmic proteins to ensure appropriate nascent protein targeting. The NAC complex also promotes mitochondrial protein import by enhancing productive ribosome interactions with the outer mitochondrial membrane and blocks the inappropriate interaction of ribosomes translating non-secretory nascent polypeptides with translocation sites in the membrane of the endoplasmic reticulum. EGD1 may act as a transcription factor that exert a negative effect on the expression of several genes that are transcribed by RNA polymerase II. This is Nascent polypeptide-associated complex subunit beta (EGD1) from Mycosarcoma maydis (Corn smut fungus).